Consider the following 512-residue polypeptide: Probable malate:quinone oxidoreductase (512 aa).

This sequence belongs to the MQO family. The cofactor is FAD.

The enzyme catalyses (S)-malate + a quinone = a quinol + oxaloacetate. It functions in the pathway carbohydrate metabolism; tricarboxylic acid cycle; oxaloacetate from (S)-malate (quinone route): step 1/1. In Rhodococcus erythropolis (strain PR4 / NBRC 100887), this protein is Probable malate:quinone oxidoreductase.